Consider the following 467-residue polypeptide: Uronate isomerase (467 aa).

It belongs to the metallo-dependent hydrolases superfamily. Uronate isomerase family.

It carries out the reaction D-glucuronate = D-fructuronate. The enzyme catalyses aldehydo-D-galacturonate = keto-D-tagaturonate. The protein operates within carbohydrate metabolism; pentose and glucuronate interconversion. The sequence is that of Uronate isomerase from Flavobacterium johnsoniae (strain ATCC 17061 / DSM 2064 / JCM 8514 / BCRC 14874 / CCUG 350202 / NBRC 14942 / NCIMB 11054 / UW101) (Cytophaga johnsonae).